Here is a 173-residue protein sequence, read N- to C-terminus: NADH-ubiquinone oxidoreductase chain 6 (173 aa).

Helical transmembrane passes span 1–21 (MTYFVLFLGLCFVLGSLAVAS), 27–47 (YGVVGLVLASIAGCGWLLSLG), 48–68 (VSFVSLVLFMVYLGGMLVVFV), 87–107 (VVGYGVGFVAVLMVGLIVGGF), and 139–159 (CGVGMFLVAGWGLLLTLFVVL).

The protein belongs to the complex I subunit 6 family.

Its subcellular location is the mitochondrion membrane. The catalysed reaction is a ubiquinone + NADH + 5 H(+)(in) = a ubiquinol + NAD(+) + 4 H(+)(out). Functionally, core subunit of the mitochondrial membrane respiratory chain NADH dehydrogenase (Complex I) that is believed to belong to the minimal assembly required for catalysis. Complex I functions in the transfer of electrons from NADH to the respiratory chain. The immediate electron acceptor for the enzyme is believed to be ubiquinone. This is NADH-ubiquinone oxidoreductase chain 6 (MT-ND6) from Aethia cristatella (Crested auklet).